We begin with the raw amino-acid sequence, 114 residues long: Hydrogenase maturation factor HypA (114 aa).

Residue His2 coordinates Ni(2+). Positions 73, 76, 89, and 92 each coordinate Zn(2+).

It belongs to the HypA/HybF family.

Its function is as follows. Involved in the maturation of [NiFe] hydrogenases. Required for nickel insertion into the metal center of the hydrogenase. The protein is Hydrogenase maturation factor HypA of Desulfitobacterium hafniense (strain DSM 10664 / DCB-2).